A 198-amino-acid chain; its full sequence is Protein GrpE (198 aa).

Belongs to the GrpE family. As to quaternary structure, homodimer.

The protein localises to the cytoplasm. In terms of biological role, participates actively in the response to hyperosmotic and heat shock by preventing the aggregation of stress-denatured proteins, in association with DnaK and GrpE. It is the nucleotide exchange factor for DnaK and may function as a thermosensor. Unfolded proteins bind initially to DnaJ; upon interaction with the DnaJ-bound protein, DnaK hydrolyzes its bound ATP, resulting in the formation of a stable complex. GrpE releases ADP from DnaK; ATP binding to DnaK triggers the release of the substrate protein, thus completing the reaction cycle. Several rounds of ATP-dependent interactions between DnaJ, DnaK and GrpE are required for fully efficient folding. The polypeptide is Protein GrpE (Vibrio harveyi (Beneckea harveyi)).